We begin with the raw amino-acid sequence, 376 residues long: Actin-related protein T1 (376 aa).

Belongs to the actin family.

The protein resides in the cytoplasm. Its subcellular location is the cytoskeleton. The protein localises to the nucleus. It is found in the cytoplasmic vesicle. It localises to the secretory vesicle. The protein resides in the acrosome. Its function is as follows. Negatively regulates the Hedgehog (SHH) signaling. Binds to the promoter of the SHH signaling mediator, GLI1, and inhibits its expression. This Rattus norvegicus (Rat) protein is Actin-related protein T1 (Actrt1).